Here is a 381-residue protein sequence, read N- to C-terminus: tRNA pseudouridine synthase D (381 aa).

Asp-81 acts as the Nucleophile in catalysis. In terms of domain architecture, TRUD spans 160 to 335 (GMPNYFGSQR…TLGSRRFFWV (176 aa)).

Belongs to the pseudouridine synthase TruD family.

The catalysed reaction is uridine(13) in tRNA = pseudouridine(13) in tRNA. Its function is as follows. Responsible for synthesis of pseudouridine from uracil-13 in transfer RNAs. This chain is tRNA pseudouridine synthase D, found in Helicobacter acinonychis (strain Sheeba).